A 150-amino-acid chain; its full sequence is Copper transporter 3 (150 aa).

Helical transmembrane passes span 50–70 (GGMYALALAAVFALAVLLEFL) and 100–120 (LAYLLMLALMSFNVGVLLAAV).

This sequence belongs to the copper transporter (Ctr) (TC 1.A.56) family. SLC31A subfamily.

The protein resides in the membrane. In terms of biological role, involved in the transport of copper. This Oryza sativa subsp. japonica (Rice) protein is Copper transporter 3 (COPT3).